The primary structure comprises 255 residues: S-adenosyl-L-methionine-dependent uroporphyrinogen III methyltransferase (255 aa).

S-adenosyl-L-homocysteine contacts are provided by residues Pro15, 91 to 93 (GGD), 121 to 122 (TS), Met175, and Ala232.

This sequence belongs to the precorrin methyltransferase family. In terms of assembly, homodimer.

It catalyses the reaction uroporphyrinogen III + 2 S-adenosyl-L-methionine = precorrin-2 + 2 S-adenosyl-L-homocysteine + H(+). It functions in the pathway porphyrin-containing compound metabolism; siroheme biosynthesis; precorrin-2 from uroporphyrinogen III: step 1/1. Functionally, involved in the archaeal biosynthesis of heme. Catalyzes the methylation of carbons 2 and 7 of uroporphyrinogen-III (UROGEN) to yield precorrin-2. It does not catalyze the overmethylation of precorrin-2 to trimethylpyrrocorphin. In Methanosarcina barkeri (strain Fusaro / DSM 804), this protein is S-adenosyl-L-methionine-dependent uroporphyrinogen III methyltransferase.